The following is a 223-amino-acid chain: Protein-L-isoaspartate O-methyltransferase (223 aa).

S70 is a catalytic residue.

This sequence belongs to the methyltransferase superfamily. L-isoaspartyl/D-aspartyl protein methyltransferase family.

It localises to the cytoplasm. It carries out the reaction [protein]-L-isoaspartate + S-adenosyl-L-methionine = [protein]-L-isoaspartate alpha-methyl ester + S-adenosyl-L-homocysteine. Catalyzes the methyl esterification of L-isoaspartyl residues in peptides and proteins that result from spontaneous decomposition of normal L-aspartyl and L-asparaginyl residues. It plays a role in the repair and/or degradation of damaged proteins. In Methylobacillus flagellatus (strain ATCC 51484 / DSM 6875 / VKM B-1610 / KT), this protein is Protein-L-isoaspartate O-methyltransferase.